Here is a 280-residue protein sequence, read N- to C-terminus: Acetyl-coenzyme A carboxylase carboxyl transferase subunit beta (280 aa).

A CoA carboxyltransferase N-terminal domain is found at 25–280 (VMRECPICHA…RLHTKENAYG (256 aa)). Residues Cys-29, Cys-32, Cys-47, and Cys-50 each coordinate Zn(2+). The C4-type zinc-finger motif lies at 29–50 (CPICHAKFLSMRLGRDHTCPKC).

This sequence belongs to the AccD/PCCB family. As to quaternary structure, acetyl-CoA carboxylase is a heterohexamer composed of biotin carboxyl carrier protein (AccB), biotin carboxylase (AccC) and two subunits each of ACCase subunit alpha (AccA) and ACCase subunit beta (AccD). Zn(2+) is required as a cofactor.

Its subcellular location is the cytoplasm. The catalysed reaction is N(6)-carboxybiotinyl-L-lysyl-[protein] + acetyl-CoA = N(6)-biotinyl-L-lysyl-[protein] + malonyl-CoA. It participates in lipid metabolism; malonyl-CoA biosynthesis; malonyl-CoA from acetyl-CoA: step 1/1. Functionally, component of the acetyl coenzyme A carboxylase (ACC) complex. Biotin carboxylase (BC) catalyzes the carboxylation of biotin on its carrier protein (BCCP) and then the CO(2) group is transferred by the transcarboxylase to acetyl-CoA to form malonyl-CoA. This chain is Acetyl-coenzyme A carboxylase carboxyl transferase subunit beta, found in Lactobacillus helveticus (strain DPC 4571).